The chain runs to 122 residues: Large ribosomal subunit protein uL14c (122 aa).

It belongs to the universal ribosomal protein uL14 family. As to quaternary structure, part of the 50S ribosomal subunit.

The protein localises to the plastid. It localises to the chloroplast. Binds to 23S rRNA. The sequence is that of Large ribosomal subunit protein uL14c from Oenothera biennis (German evening primrose).